The chain runs to 352 residues: N-acetyl-gamma-glutamyl-phosphate reductase (352 aa).

Residue C155 is part of the active site.

It belongs to the NAGSA dehydrogenase family. Type 1 subfamily.

It localises to the cytoplasm. The catalysed reaction is N-acetyl-L-glutamate 5-semialdehyde + phosphate + NADP(+) = N-acetyl-L-glutamyl 5-phosphate + NADPH + H(+). It functions in the pathway amino-acid biosynthesis; L-arginine biosynthesis; N(2)-acetyl-L-ornithine from L-glutamate: step 3/4. Catalyzes the NADPH-dependent reduction of N-acetyl-5-glutamyl phosphate to yield N-acetyl-L-glutamate 5-semialdehyde. This is N-acetyl-gamma-glutamyl-phosphate reductase from Synechococcus elongatus (strain ATCC 33912 / PCC 7942 / FACHB-805) (Anacystis nidulans R2).